The chain runs to 994 residues: Valine--tRNA ligase (994 aa).

The 'HIGH' region signature appears at 43 to 53; the sequence is PNVTGTLHMGH. Positions 329–345 are enriched in polar residues; sequence QSGMPSGATSDTTNTPS. A disordered region spans residues 329-355; that stretch reads QSGMPSGATSDTTNTPSDPEASSAANQ. Positions 585–589 match the 'KMSKS' region motif; that stretch reads KMSKS. K588 serves as a coordination point for ATP. Positions 692–714 are disordered; that stretch reads AHSPAQHQAGQDGQDAPRTPQPR. Positions 696–707 are enriched in low complexity; that stretch reads AQHQAGQDGQDA. Residues 928 to 994 are a coiled coil; it reads LIDVDAERVR…NGLRERRATL (67 aa).

This sequence belongs to the class-I aminoacyl-tRNA synthetase family. ValS type 1 subfamily. In terms of assembly, monomer.

The protein resides in the cytoplasm. It catalyses the reaction tRNA(Val) + L-valine + ATP = L-valyl-tRNA(Val) + AMP + diphosphate. Catalyzes the attachment of valine to tRNA(Val). As ValRS can inadvertently accommodate and process structurally similar amino acids such as threonine, to avoid such errors, it has a 'posttransfer' editing activity that hydrolyzes mischarged Thr-tRNA(Val) in a tRNA-dependent manner. The polypeptide is Valine--tRNA ligase (Xylella fastidiosa (strain 9a5c)).